The chain runs to 357 residues: Protein RecA (357 aa).

67-74 (GPESSGKT) is a binding site for ATP. The disordered stretch occupies residues 334–357 (ELKPAAAGNSHDEDELAGEGKEEF).

This sequence belongs to the RecA family.

It localises to the cytoplasm. Functionally, can catalyze the hydrolysis of ATP in the presence of single-stranded DNA, the ATP-dependent uptake of single-stranded DNA by duplex DNA, and the ATP-dependent hybridization of homologous single-stranded DNAs. It interacts with LexA causing its activation and leading to its autocatalytic cleavage. This is Protein RecA from Pectobacterium atrosepticum (strain SCRI 1043 / ATCC BAA-672) (Erwinia carotovora subsp. atroseptica).